A 193-amino-acid polypeptide reads, in one-letter code: Ribonuclease HII (193 aa).

Residues 3–192 enclose the RNase H type-2 domain; sequence SLVAGIDEVG…VRAVIDRSSA (190 aa). 3 residues coordinate a divalent metal cation: aspartate 9, glutamate 10, and aspartate 101.

This sequence belongs to the RNase HII family. Requires Mn(2+) as cofactor. The cofactor is Mg(2+).

It is found in the cytoplasm. It carries out the reaction Endonucleolytic cleavage to 5'-phosphomonoester.. Its function is as follows. Endonuclease that specifically degrades the RNA of RNA-DNA hybrids. In Methylococcus capsulatus (strain ATCC 33009 / NCIMB 11132 / Bath), this protein is Ribonuclease HII.